The primary structure comprises 71 residues: Small ribosomal subunit protein bS21 (71 aa).

Positions 37–71 (HYEKPTAERKRKKAAAVKRHMKKLSRDNARRVKLY) are disordered. Basic residues predominate over residues 45–59 (RKRKKAAAVKRHMKK). Over residues 60–71 (LSRDNARRVKLY) the composition is skewed to basic and acidic residues.

It belongs to the bacterial ribosomal protein bS21 family.

In Pseudoalteromonas translucida (strain TAC 125), this protein is Small ribosomal subunit protein bS21.